A 149-amino-acid polypeptide reads, in one-letter code: Nucleoside diphosphate kinase (149 aa).

Residues K9, F57, R85, T91, R102, and N112 each coordinate ATP. H115 acts as the Pros-phosphohistidine intermediate in catalysis.

It belongs to the NDK family. As to quaternary structure, homotetramer. Mg(2+) is required as a cofactor.

Its subcellular location is the cytoplasm. It carries out the reaction dZDP + ATP = dZTP + ADP. The enzyme catalyses a 2'-deoxyribonucleoside 5'-diphosphate + ATP = a 2'-deoxyribonucleoside 5'-triphosphate + ADP. It catalyses the reaction a ribonucleoside 5'-diphosphate + ATP = a ribonucleoside 5'-triphosphate + ADP. Its pathway is purine metabolism. In terms of biological role, major role in the synthesis of nucleoside triphosphates other than ATP. The ATP gamma phosphate is transferred to the NDP beta phosphate via a ping-pong mechanism, using a phosphorylated active-site intermediate. (Microbial infection) Catalyzes the phosphorylation of dZDP to dZTP, when the bacterium is infected by a phage that produces the substrate for the synthesis of dZTP (2- amino-2'-deoxyadenosine 5'-triphosphate), which is then used by the phage as a DNA polymerase substrate. The sequence is that of Nucleoside diphosphate kinase from Synechococcus elongatus (strain ATCC 33912 / PCC 7942 / FACHB-805) (Anacystis nidulans R2).